The following is a 222-amino-acid chain: von Willebrand factor C domain-containing protein 2-like (222 aa).

The signal sequence occupies residues 1-21; it reads MALHIHEACILLLVIPGLVTS. VWFC domains lie at 51 to 110 and 114 to 172; these read KGCV…PECK and NFCE…PVCK.

Peripherally associated with AMPAR complex. AMPAR complex consists of an inner core made of 4 pore-forming GluA/GRIA proteins (GRIA1, GRIA2, GRIA3 and GRIA4) and 4 major auxiliary subunits arranged in a twofold symmetry. One of the two pairs of distinct binding sites is occupied either by CNIH2, CNIH3 or CACNG2, CACNG3. The other harbors CACNG2, CACNG3, CACNG4, CACNG8 or GSG1L. This inner core of AMPAR complex is complemented by outer core constituents binding directly to the GluA/GRIA proteins at sites distinct from the interaction sites of the inner core constituents. Outer core constituents include at least PRRT1, PRRT2, CKAMP44/SHISA9, FRRS1L and NRN1. The proteins of the inner and outer core serve as a platform for other, more peripherally associated AMPAR constituents, including VWC2L. Alone or in combination, these auxiliary subunits control the gating and pharmacology of the AMPAR complex and profoundly impact their biogenesis and protein processing. As to expression, predominantly expressed in the brain (at protein level). Also detected in bones, including femur and calvaria, heart, lung and kidney. Isoform 5 is predominant in lung and heart, compared to isoforms 1 and 3. Isoform 4 is expressed in femur and calvaria at higher levels than isoforms 1 and 5. Isoforms 1 and 4 are expressed at higher levels than isoform 5 in kidney and brain.

It is found in the secreted. It localises to the synapse. In terms of biological role, may play a role in neurogenesis. May promote matrix mineralization, but has been shown to weakly, but significantly inhibit BMP2 and BMP6 activity in a preosteoblastic cell line. This is von Willebrand factor C domain-containing protein 2-like (Vwc2l) from Mus musculus (Mouse).